Reading from the N-terminus, the 338-residue chain is Ferrochelatase (338 aa).

Fe cation-binding residues include H189 and E293.

This sequence belongs to the ferrochelatase family.

The protein localises to the cytoplasm. The catalysed reaction is heme b + 2 H(+) = protoporphyrin IX + Fe(2+). The protein operates within porphyrin-containing compound metabolism; protoheme biosynthesis; protoheme from protoporphyrin-IX: step 1/1. Its function is as follows. Catalyzes the ferrous insertion into protoporphyrin IX. This is Ferrochelatase from Azotobacter vinelandii (strain DJ / ATCC BAA-1303).